Consider the following 465-residue polypeptide: Cytochrome c peroxidase Ccp (465 aa).

At 1–6 the chain is on the cytoplasmic side; it reads MKMVSR. The chain crosses the membrane as a helical span at residues 7–27; that stretch reads ITAIGLAGVAICYLGLSGYVW. The Periplasmic segment spans residues 28–465; that stretch reads YHDNKRSKQA…VYTPYMQDKQ (438 aa). 3 consecutive Cytochrome c domains span residues 42–155, 185–287, and 337–454; these read SAVS…AKQR, QKVA…EKDP, and AQQK…HSLN. Residues cysteine 59, cysteine 62, histidine 63, methionine 125, cysteine 207, cysteine 210, histidine 211, cysteine 351, cysteine 354, histidine 355, and methionine 429 each coordinate heme c.

In terms of assembly, the recombinant enzyme lacking its transmembrane domain is a monomer in solution. Requires heme c as cofactor.

Its subcellular location is the cell inner membrane. Does not require reductive activation for maximum activity, as peroxidatic heme is high-spin His/OH(-) 6-coordinated. Calcium ions are needed to attain maximum peroxidase activity. Functionally, cytochrome peroxidase that enables anaerobic respiration with H(2)O(2) as a terminal electron acceptor. It receives electrons from the quinol pool. Menaquinol is probably the electron donor in vivo. It can use menadiol (a menaquinol analog), hydroquinone, duroquinol and the artificial electron donor ABTS(2-) in vitro, but only menadiol and hydroquinone can efficiently transfer electrons to Ccp, maintaining the catalytic activity of the enzyme. It enables E.coli to grow on a nonfermentable carbon source when H(2)O(2) is supplied. Plays a role in the peroxide stress response under anaerobic conditions. However, it does not degrade H(2)O(2) quickly enough to lower the periplasmic H(2)O(2) level below that of the surrounding medium and protect the cell from its toxic effects. This chain is Cytochrome c peroxidase Ccp, found in Escherichia coli (strain K12).